The chain runs to 341 residues: Major histocompatibility complex class I-related protein 1 (341 aa).

Positions 1 to 22 (MGELMAFLLPLIIVLMVKHSDS) are cleaved as a signal peptide. The tract at residues 23–109 (RTHSLRYFRL…KRLQRHYNHS (87 aa)) is alpha-1. An antigen-binding cleft region spans residues 23–201 (RTHSLRYFRL…EYGKDTLQRT (179 aa)). Residues 23–302 (RTHSLRYFRL…QESETIPLVM (280 aa)) lie on the Extracellular side of the membrane. 5-(2-oxoethylideneamino)-6-(D-ribitylamino)uracil is bound by residues R31, S46, and K65. R31, S46, and K65 together coordinate 5-(2-oxopropylideneamino)-6-(D-ribitylamino)uracil. 7-hydroxy-6-methyl-8-(1-D-ribityl)lumazine-binding residues include R31, S46, and K65. R31 provides a ligand contact to 8-(9H-purin-6-yl)-2-oxa-8-azabicyclo[3.3.1]nona-3,6-diene-4,6-dicarbaldehyde. 8-(9H-purin-6-yl)-2-oxa-8-azabicyclo[3.3.1]nona-3,6-diene-4,6-dicarbaldehyde-binding residues include K65 and H80. Residue K65 participates in 2-amino-4-oxopteridine-6-carbaldehyde binding. Pyridoxal is bound at residue K65. N107 is a glycosylation site (N-linked (GlcNAc...) asparagine). Residues 110–201 (GSHTYQRMIG…EYGKDTLQRT (92 aa)) form an alpha-2 region. 5-(2-oxoethylideneamino)-6-(D-ribitylamino)uracil-binding residues include R116, Y174, and Q175. 5-(2-oxopropylideneamino)-6-(D-ribitylamino)uracil is bound by residues R116, Y174, and Q175. R116, Y174, and Q175 together coordinate 7-hydroxy-6-methyl-8-(1-D-ribityl)lumazine. R116 contacts 8-(9H-purin-6-yl)-2-oxa-8-azabicyclo[3.3.1]nona-3,6-diene-4,6-dicarbaldehyde. Intrachain disulfides connect C120–C183 and C222–C278. An alpha-3 region spans residues 202–293 (EPPLVRVNRK…GVHMVLQVPQ (92 aa)). The 97-residue stretch at 203–299 (PPLVRVNRKE…QVPQESETIP (97 aa)) folds into the Ig-like C1-type domain. The connecting peptide stretch occupies residues 294–302 (ESETIPLVM). The chain crosses the membrane as a helical span at residues 303–323 (KAVSGSIVLVIVLAGVGVLVW). Residues 324-341 (RRRPREQNGAIYLPTPDR) are Cytoplasmic-facing.

It belongs to the MHC class I family. As to quaternary structure, heterotrimer that consists of MR1, B2M and a metabolite antigen. Major classes of metabolite ligands presented by MR1 include riboflavin-related antigens, pyrimidines and ribityl lumazines, nucleobase adducts and folate derivatives. Forms reversible covalent Schiff base complexes with microbial pyrimidine-based metabolite, which serves as a molecular switch triggering complete folding, stable association with B2M and translocation of the ternary complex from endoplasmic reticulum to the plasma membrane. Alternatively, forms non-Schiff base complexes with ribityl lumazines. On antigen-presenting cells, the ternary complex interacts with TCR on MR1-restricted T cells, predominantly represented by CD8-positive and CD4- and CD8-double negative MAIT cell subsets. Interacts with TAPBP and TAPBPL chaperones in the endoplasmic reticulum. TAPBP associated or not with MHC class I peptide loading complex binds ligand-free MR1 or MR1-B2M complex, providing for stable MR1 pools ready for metabolite antigen processing. TAPBPL interacts with MR1 in a ligand-independent way; this interaction may stabilize MR1 pool and facilitate ligand loading and dissociation. MR1-B2M heterodimer adopts a topology similar to classical MHC class I molecules, with alpha-1 and alpha-2 domains of MR1 forming the antigen-binding cleft composed of two alpha-helices resting on a floor of 7-stranded anti-parallel beta-pleated sheet. The ribityl moiety of pyrimidine-based antigens is recognized by Tyr-95 residue in the CDR3 alpha loop of the invariant TRAV1-2 TCR. Homodimerizes and does not associate with B2M. N-glycosylated. Ubiquitous. Low expression is detected in peripheral blood B cells, T cells, monocytes and in bronchial epithelial cells (at protein level). Expressed in plasmablasts or plasma B cells in the lamina propria of ileum, appendix and colon (at protein level). Highly expressed on a subset of CD45-positive CD3-positive thymocytes (at protein level).

Its subcellular location is the cell membrane. It is found in the endoplasmic reticulum membrane. The protein resides in the golgi apparatus membrane. It localises to the early endosome membrane. The protein localises to the late endosome membrane. Its subcellular location is the secreted. Inhibited by pterin-based metabolites such as 6-formylpterin (6-FP, a product of folic acid photodegradation). 6-FP competitively inhibits MAIT cell activation by 5-OP-RU. Modulated by commonly prescribed anti-inflammatory drug metabolites. Inhibited by salicilates such as 3-formylsalicylic and 5-formylsalicylic acids. Activated by diclofenac and/or its hydroxy metabolites. In terms of biological role, antigen-presenting molecule specialized in displaying microbial pyrimidine-based metabolites to alpha-beta T cell receptors (TCR) on innate-type mucosal-associated invariant T (MAIT) cells. In complex with B2M preferentially presents riboflavin-derived metabolites to semi-invariant TRAV1.2 TCRs on MAIT cells, guiding immune surveillance of the microbial metabolome at mucosal epithelial barriers. Signature pyrimidine-based microbial antigens are generated via non-enzymatic condensation of metabolite intermediates of the riboflavin pathway with by-products arising from other metabolic pathways such as glycolysis. Typical potent antigenic metabolites are 5-(2-oxoethylideneamino)-6-D-ribitylaminouracil (5-OE-RU) and 5-(2-oxopropylideneamino)-6-D-ribitylaminouracil (5-OP-RU), products of condensation of 5-amino-6-D-ribityaminouracil (5-A-RU) with glyoxal or methylglyoxal by-products, respectively. May present microbial antigens to various TRAV1-2-negative MAIT cell subsets, providing for unique recognition of diverse microbes, including pathogens that do not synthesize riboflavin. Upon antigen recognition, elicits rapid innate-type MAIT cell activation to eliminate pathogenic microbes by directly killing infected cells. During T cell development, drives thymic selection and post-thymic terminal differentiation of MAIT cells in a process dependent on commensal microflora. Acts as an immune sensor of cancer cell metabolome. May present a tumor-specific or -associated metabolite essential for cancer cell survival to a 'pan-cancer' TCR consisting of TRAV38.2-DV8*TRAJ31 alpha chain paired with a TRBV25.1*TRBJ2.3 beta chain on a non-MAIT CD8-positive T cell clone (MC.7.G5), triggering T cell-mediated killing of a wide range of cancer cell types. Its function is as follows. Allele MR1*01: Presents microbial-derived metabolite 5-OP-RU to semi-invariant TRAV1.2-TRAJ33-TRBV6.1 (A-F7) TCR on MAIT cells. Presents nucleobase carbonyl adducts generated during oxidative stress. Captures M3Ade, a nucleobase adduct composed of one adenine modified by a malondialdehyde trimer, for recognition by MR1-restricted T cell clones expressing a polyclonal TCR repertoire. Displays moderate binding affinity toward tumor-enriched pyridoxal and pyridoxal 5'-phosphate antigens. Functionally, allele MR1*04: Presents tumor-enriched metabolite pyridoxal to pan-cancer 7.G5 TCR on T cells enabling preferential recognition of cancer cells. May act as an alloantigen. The protein is Major histocompatibility complex class I-related protein 1 of Homo sapiens (Human).